The sequence spans 139 residues: Putative nickel-responsive regulator (139 aa).

Residues His-79, His-90, His-92, and Cys-98 each coordinate Ni(2+).

It belongs to the transcriptional regulatory CopG/NikR family. It depends on Ni(2+) as a cofactor.

Functionally, transcriptional regulator. This is Putative nickel-responsive regulator from Anaeromyxobacter sp. (strain K).